Reading from the N-terminus, the 155-residue chain is 17.6 kDa class I heat shock protein 1 (155 aa).

The sHSP domain occupies 39 to 154 (SSSAIANARV…KAQVKSIDIS (116 aa)).

Belongs to the small heat shock protein (HSP20) family. In terms of assembly, forms oligomeric structures. Binds to AKR2A.

It is found in the cytoplasm. Its function is as follows. Possesses chaperone activity. This is 17.6 kDa class I heat shock protein 1 (HSP17.6A) from Arabidopsis thaliana (Mouse-ear cress).